The following is a 289-amino-acid chain: uncharacterized protein (289 aa).

This is an uncharacterized protein from Acanthamoeba polyphaga mimivirus (APMV).